Consider the following 159-residue polypeptide: Ribosomal RNA large subunit methyltransferase H (159 aa).

S-adenosyl-L-methionine is bound by residues L76, G108, and 127 to 132 (FSKMTF).

Belongs to the RNA methyltransferase RlmH family. Homodimer.

Its subcellular location is the cytoplasm. The catalysed reaction is pseudouridine(1915) in 23S rRNA + S-adenosyl-L-methionine = N(3)-methylpseudouridine(1915) in 23S rRNA + S-adenosyl-L-homocysteine + H(+). In terms of biological role, specifically methylates the pseudouridine at position 1915 (m3Psi1915) in 23S rRNA. The chain is Ribosomal RNA large subunit methyltransferase H from Bifidobacterium longum (strain DJO10A).